The chain runs to 1288 residues: Structural maintenance of chromosomes protein 4 (1288 aa).

Polar residues predominate over residues 1–10 (MPRKGTQPST). Positions 1-55 (MPRKGTQPSTARRREEGPPPPSPDGASSDAEPEPPSGRTESPATAAETASEELDN) are disordered. Phosphoserine occurs at positions 22 and 28. Thr39 carries the post-translational modification Phosphothreonine. Residues 39–48 (TESPATAAET) are compositionally biased toward low complexity. Phosphoserine is present on residues Ser41 and Ser50. 113 to 120 (GPNGSGKS) serves as a coordination point for ATP. Phosphoserine is present on Ser143. Residues 272 to 588 (RRVEILNEHR…LFQKVEEAKS (317 aa)) are a coiled coil. An N6-acetyllysine mark is found at Lys381 and Lys679. The region spanning 613–727 (PGIYGRLGDL…ADNLDQATRV (115 aa)) is the SMC hinge domain. A coiled-coil region spans residues 767–1020 (LVIEISEEEV…ALSIKLKLEQ (254 aa)). Residues Ser982 and Ser1056 each carry the phosphoserine modification. Positions 1109–1129 (ELDKITYERDSFRQAYEDLRK) form a coiled coil.

This sequence belongs to the SMC family. SMC4 subfamily. In terms of assembly, forms a heterodimer with SMC2. Component of the condensin complex, which contains the SMC2 and SMC4 heterodimer, and three non SMC subunits that probably regulate the complex: BRRN1/CAPH, CNAP1/CAPD2 and CAPG. In terms of tissue distribution, widely expressed. Higher expression in testis, colon, thymus.

The protein localises to the nucleus. The protein resides in the cytoplasm. It localises to the chromosome. Central component of the condensin complex, a complex required for conversion of interphase chromatin into mitotic-like condense chromosomes. The condensin complex probably introduces positive supercoils into relaxed DNA in the presence of type I topoisomerases and converts nicked DNA into positive knotted forms in the presence of type II topoisomerases. In Homo sapiens (Human), this protein is Structural maintenance of chromosomes protein 4 (SMC4).